A 228-amino-acid polypeptide reads, in one-letter code: UPF0758 protein H16_A3033 (228 aa).

Residues 102-224 form the MPN domain; the sequence is GFDGPAAVRN…IRSLADCCDR (123 aa). Residues histidine 173, histidine 175, and aspartate 186 each contribute to the Zn(2+) site. Residues 173–186 carry the JAMM motif motif; sequence HNHPRGTTAPSQSD.

It belongs to the UPF0758 family.

The chain is UPF0758 protein H16_A3033 from Cupriavidus necator (strain ATCC 17699 / DSM 428 / KCTC 22496 / NCIMB 10442 / H16 / Stanier 337) (Ralstonia eutropha).